Reading from the N-terminus, the 1453-residue chain is NRPS-like tryptophan epimerase fscC (1453 aa).

The adenylation stretch occupies residues 37-433; it reads SYGELSAMSS…ATHLIRNCVV (397 aa). Positions 544 to 626 constitute a Carrier domain; it reads TGSRQSTRHK…LFHTSKSRFT (83 aa). At Ser586 the chain carries O-(pantetheine 4'-phosphoryl)serine. Residues 639-1053 form an epimerization (E) domain region; that stretch reads FPLSPVQRFF…KDVLESAGVF (415 aa). The tract at residues 1181–1391 is condensation; sequence FFGLQSNERA…AGSSLHQHNQ (211 aa).

This sequence belongs to the NRP synthetase family. The cofactor is pantetheine 4'-phosphate.

Its pathway is secondary metabolite biosynthesis. In terms of biological role, NRPS-like tryptophan epimerase; part of the fragmented gene cluster that mediates the biosynthesis of fusarochromene, a tryptophan-derived metabolite closely related to a group of mycotoxins including fusarochromanone. Within the pathway, fscC catalyzes the first step via epimerization of L-tryptophan to provide the intermediate D-tryptophan. D-tryptophan is subsequently hydroxylated by the tryptophan 6-hydroxylase fscE to yield 6-hydroxytryptophan. The pyrrole ring undergoes cleavaged by the tryptophan 2,3-dioxygenase fscD and is finally converted to 4-hydroxykyrunenine by the hydrolase fscH. The NRPS-like oxidoreductase fscA reduces the carboxyl group to primary alcohol and the DMATS-type prenyltransferase fscG performs prenylation, followed by the formation of a chromene ring catalyzed by the oxidoreductase fscI, which leads to desacetylfusarochromene. Epoxidation by fscF and rearrangement reactions of chromene double bonds convert compound desacetylfusarochromene to fusarochromanones. Although specific acetyltransferases were not found near the fsc gene cluster, several predicted enzymes containing the N-acetyltransferase superfamily domain are present in the genome of F.equiseti. These predicted enzymes may have the potential to convert desacetylfusarochromene to fusarochromene. The chain is NRPS-like tryptophan epimerase fscC from Fusarium equiseti (Fusarium scirpi).